The sequence spans 89 residues: Small ribosomal subunit protein uS15 (89 aa).

Belongs to the universal ribosomal protein uS15 family. Part of the 30S ribosomal subunit. Forms a bridge to the 50S subunit in the 70S ribosome, contacting the 23S rRNA.

Functionally, one of the primary rRNA binding proteins, it binds directly to 16S rRNA where it helps nucleate assembly of the platform of the 30S subunit by binding and bridging several RNA helices of the 16S rRNA. Its function is as follows. Forms an intersubunit bridge (bridge B4) with the 23S rRNA of the 50S subunit in the ribosome. This chain is Small ribosomal subunit protein uS15, found in Pseudomonas entomophila (strain L48).